A 223-amino-acid polypeptide reads, in one-letter code: Serum amyloid P-component (223 aa).

An N-terminal signal peptide occupies residues 1–19; that stretch reads MNKPLLWISVLTSLLEAFA. The Pentraxin (PTX) domain occupies 24–223; sequence SGKVFVFPRE…YVIIKPLVWV (200 aa). Residue Asn-51 is glycosylated (N-linked (GlcNAc...) asparagine). Cysteines 55 and 114 form a disulfide. Asp-77, Asn-78, Glu-155, Gln-156, Asp-157, and Gln-167 together coordinate Ca(2+).

The protein belongs to the pentraxin family. In terms of assembly, homopentamer. Pentraxin (or pentaxin) have a discoid arrangement of 5 non-covalently bound subunits. Ca(2+) is required as a cofactor. Post-translationally, N-glycosylated with a complex biantennary oligosaccharide chain with a sialic acid at the end (disialo-SAP). Monosialo-SAP as well as asioalo-SAP are also detected. Found in serum and urine.

The protein resides in the secreted. Can interact with DNA and histones and may scavenge nuclear material released from damaged circulating cells. May also function as a calcium-dependent lectin. This is Serum amyloid P-component (APCS) from Homo sapiens (Human).